The primary structure comprises 155 residues: D-aminoacyl-tRNA deacylase (155 aa).

Positions 147–148 match the Gly-cisPro motif, important for rejection of L-amino acids motif; it reads GP.

The protein belongs to the DTD family. As to quaternary structure, homodimer.

It localises to the cytoplasm. The enzyme catalyses glycyl-tRNA(Ala) + H2O = tRNA(Ala) + glycine + H(+). The catalysed reaction is a D-aminoacyl-tRNA + H2O = a tRNA + a D-alpha-amino acid + H(+). An aminoacyl-tRNA editing enzyme that deacylates mischarged D-aminoacyl-tRNAs. Also deacylates mischarged glycyl-tRNA(Ala), protecting cells against glycine mischarging by AlaRS. Acts via tRNA-based rather than protein-based catalysis; rejects L-amino acids rather than detecting D-amino acids in the active site. By recycling D-aminoacyl-tRNA to D-amino acids and free tRNA molecules, this enzyme counteracts the toxicity associated with the formation of D-aminoacyl-tRNA entities in vivo and helps enforce protein L-homochirality. This is D-aminoacyl-tRNA deacylase from Corynebacterium urealyticum (strain ATCC 43042 / DSM 7109).